The chain runs to 2623 residues: Immunoglobulin superfamily member 10 (2623 aa).

The signal sequence occupies residues 1 to 28 (MKVKGRGITCLLVSFAVICLVATPGGKA). The 28-residue stretch at 29–56 (CPRRCACYMPTEVHCTFRYLTSIPDSIP) folds into the LRRNT domain. 6 LRR repeats span residues 58 to 79 (NVERINLGYNSLVRLMETDFSG), 82 to 103 (KLELLMLHSNGIHTIPDKTFSD), 106 to 127 (ALQVLKMSYNKVRKLQKDTFYG), 130 to 151 (SLTRLHMDHNNIEFINPEVFYG), 154 to 175 (FLRLVHLEGNQLTKLHPDTFVS), and 186 to 207 (FIKFLYLSDNFLTSLPQEMVSY). The LRRCT domain occupies 219–281 (NPWTCDCHLK…VSAAAFQCAK (63 aa)). N-linked (GlcNAc...) asparagine glycosylation is found at N319 and N439. Ig-like C2-type domains lie at 461-567 (PRAE…YRIT) and 571-661 (PLVE…FQVS). 2 disulfide bridges follow: C497-C551 and C595-C645. N627 carries N-linked (GlcNAc...) asparagine glycosylation. 2 disordered regions span residues 668 to 692 (RPLEHDGETEGSGLDESNPIAHLKE) and 767 to 788 (AMPDKRENTTVSPPPVVTQLPN). N774 and N999 each carry an N-linked (GlcNAc...) asparagine glycan. Disordered regions lie at residues 1334–1376 (TQTE…AMTP) and 1434–1453 (STIASETTLSSKSHQSTTTR). The segment covering 1335 to 1356 (QTERSRAQTIQREQEPQKKNRT) has biased composition (basic and acidic residues). Residues 1357–1373 (DPNISPDQSSGFTTPTA) show a composition bias toward polar residues. Ig-like C2-type domains follow at residues 1648-1739 (PRIV…VTLS), 1745-1836 (PRIL…VKIQ), 1841-1933 (PPVI…VMLT), 1941-2034 (PRIE…VSLR), 2037-2135 (PAKI…VHLT), 2141-2229 (PRIR…YKLD), 2234-2331 (PPLI…LEVL), 2337-2427 (PTFR…VILE), 2432-2518 (PVIL…TLIT), and 2528-2623 (PRIT…IQVI). Intrachain disulfides connect C1670–C1723, C1767–C1820, and C1864–C1917. Residues N1899 and N1962 are each glycosylated (N-linked (GlcNAc...) asparagine). Cystine bridges form between C1963–C2016, C2060–C2119, C2163–C2213, C2261–C2313, C2359–C2411, C2454–C2506, and C2550–C2605. A glycan (N-linked (GlcNAc...) asparagine) is linked at N2101. Y2603 is modified (phosphotyrosine).

It is found in the secreted. In terms of biological role, involved in the control of early migration of neurons expressing gonadotropin-releasing hormone (GNRH neurons). May be involved in the maintenance of osteochondroprogenitor cells pool. The protein is Immunoglobulin superfamily member 10 (IGSF10) of Homo sapiens (Human).